Here is a 426-residue protein sequence, read N- to C-terminus: Protein FAM181B (426 aa).

Disordered regions lie at residues 106-157 (GLMG…AAAA) and 226-246 (NLPP…CGPS). A compositionally biased stretch (low complexity) spans 128–141 (PLAAPSAPTVAAPA).

Belongs to the FAM181 family.

The protein is Protein FAM181B (FAM181B) of Homo sapiens (Human).